A 291-amino-acid polypeptide reads, in one-letter code: MGISKKSQLVPLLAFITMFLMVVSRVSSSIADANSLHFSFSQFSQNPKDLILQGDATTDSDGNLQLTRVSSDGSPQGSSVGRALFYAPVHIWEKSAVVASFDATFTFLIKSPDRDPADGITFFIANTDTSIPSGSGGRLLGLFPDANIIKNSTNLDFNAAYNADTIVAVELDSYPNTDIGDPSYPHIGIDIKSIRSKSTARWNMQTGKVGTAHISYNSVAKRLSAVVSYSGTSSTTVSYDVDLNNVLPEWVRVGLSATTGLYKETNTILSWSFTSKLKTNQLQDLRIASVV.

Residues 1–28 form the signal peptide; it reads MGISKKSQLVPLLAFITMFLMVVSRVSS. Aspartate 118 serves as a coordination point for Ca(2+). Arginine 138 lines the a carbohydrate pocket. A propeptide spans 147–162 (removed in mature form); sequence NIIKNSTNLDFNAAYN. 2 residues coordinate Mn(2+): glutamate 170 and aspartate 172. Aspartate 172, tyrosine 174, asparagine 176, and aspartate 181 together coordinate Ca(2+). Tyrosine 174 serves as a coordination point for a carbohydrate. Residues aspartate 181 and histidine 186 each coordinate Mn(2+). Lysine 208 is a Ca(2+) binding site. Serine 228 serves as a coordination point for a carbohydrate. The propeptide at 281–291 is removed in mature form; sequence QLQDLRIASVV.

This sequence belongs to the leguminous lectin family. In terms of processing, the mature chain consists of residues 163-280 followed by residues 29-147. Concanavalin A-like lectins of the Diocleinae subtribe undergo proteolytic processing referred to as circular permutation. The propeptide is split into an N-terminal and a C-terminal part, the gamma and beta chain, respectively. These are then religated in beta-gamma order to form the mature alpha chain. The beta and gamma chains can often be detected in cell extracts.

Its function is as follows. D-mannose-binding lectin that also binds alpha-methyl-D-mannoside with even higher affinity. Has hemagglutinating activity against rabbit erythrocytes. Shows toxicity against the brine shrimp A.nauplii. Induces reversible paw edema and hypernociceptivity in rats. This Dioclea lasiophylla protein is Lectin.